A 61-amino-acid polypeptide reads, in one-letter code: Calprismin (61 aa).

Glycosylated. As to expression, expressed by the calcifying mantle epithelium and incorporated into the shell's calcitic prismatic layer.

The chain is Calprismin from Pinna nobilis (Noble pen shell).